The primary structure comprises 679 residues: Glycine--tRNA ligase beta subunit (679 aa).

It belongs to the class-II aminoacyl-tRNA synthetase family. Tetramer of two alpha and two beta subunits.

Its subcellular location is the cytoplasm. The enzyme catalyses tRNA(Gly) + glycine + ATP = glycyl-tRNA(Gly) + AMP + diphosphate. The protein is Glycine--tRNA ligase beta subunit of Streptococcus agalactiae serotype Ia (strain ATCC 27591 / A909 / CDC SS700).